Reading from the N-terminus, the 366-residue chain is tRNA/tmRNA (uracil-C(5))-methyltransferase (366 aa).

S-adenosyl-L-methionine-binding residues include glutamine 188, tyrosine 216, asparagine 221, glutamate 237, and aspartate 297. Catalysis depends on cysteine 322, which acts as the Nucleophile. Residue glutamate 356 is the Proton acceptor of the active site.

It belongs to the class I-like SAM-binding methyltransferase superfamily. RNA M5U methyltransferase family. TrmA subfamily.

The enzyme catalyses uridine(54) in tRNA + S-adenosyl-L-methionine = 5-methyluridine(54) in tRNA + S-adenosyl-L-homocysteine + H(+). It catalyses the reaction uridine(341) in tmRNA + S-adenosyl-L-methionine = 5-methyluridine(341) in tmRNA + S-adenosyl-L-homocysteine + H(+). In terms of biological role, dual-specificity methyltransferase that catalyzes the formation of 5-methyluridine at position 54 (m5U54) in all tRNAs, and that of position 341 (m5U341) in tmRNA (transfer-mRNA). This chain is tRNA/tmRNA (uracil-C(5))-methyltransferase, found in Histophilus somni (strain 129Pt) (Haemophilus somnus).